Consider the following 148-residue polypeptide: Putative FAD-linked sulfhydryl oxidase 096R (148 aa).

In terms of domain architecture, ERV/ALR sulfhydryl oxidase spans Met1–Tyr103. Residues Cys48 and Cys51 are joined by a disulfide bond. Residues Trp122 to Gly142 traverse the membrane as a helical segment.

The protein belongs to the IIV-6 347L family. FAD is required as a cofactor.

It is found in the membrane. It catalyses the reaction 2 R'C(R)SH + O2 = R'C(R)S-S(R)CR' + H2O2. Its function is as follows. FAD-dependent sulfhydryl oxidase that catalyzes disulfide bond formation. In Aedes vexans (Inland floodwater mosquito), this protein is Putative FAD-linked sulfhydryl oxidase 096R.